The sequence spans 215 residues: High mobility group protein B1 (215 aa).

1-10 (MGKGDPKKPR) contacts heparin. The tract at residues 1-97 (MGKGDPKKPR…KFKDPNAPKR (97 aa)) is sufficient for interaction with HAVCR2. Lys3, Lys7, Lys8, and Lys12 each carry N6-acetyllysine. The LPS binding (delipidated) stretch occupies residues 3–15 (KGDPKKPRGKMSS). Positions 9–79 (PRGKMSSYAF…RYEREMKTYI (71 aa)) form a DNA-binding region, HMG box 1. Cys23 is subject to Cysteine sulfonic acid (-SO3H); alternate. A disulfide bond links Cys23 and Cys45. Residues 27–43 (HKKKHPDASVNFSEFSK) are NLS 1. The short motif at 27–43 (HKKKHPDASVNFSEFSK) is the Nuclear localization signal (NLS) 1 element. N6-acetyllysine is present on residues Lys28, Lys29, and Lys30. Lys28 is covalently cross-linked (Isoglutamyl lysine isopeptide (Lys-Gln) (interchain with Q-?)). Ser35 is modified (phosphoserine). At Lys43 the chain carries N6-acetyllysine. Residues Lys43 and Lys44 each participate in an isoglutamyl lysine isopeptide (Lys-Gln) (interchain with Q-?) cross-link. Cys45 is modified (cysteine sulfonic acid (-SO3H); alternate). Lys68 participates in a covalent cross-link: Isoglutamyl lysine isopeptide (Lys-Gln) (interchain with Q-?). Residues 76 to 95 (KTYIPPKGETKKKFKDPNAP) are disordered. An LPS binding (Lipid A) region spans residues 80-96 (PPKGETKKKFKDPNAPK). Basic and acidic residues predominate over residues 83–94 (GETKKKFKDPNA). The segment at 89 to 108 (FKDPNAPKRPPSAFFLFCSE) is cytokine-stimulating activity. Residue Lys90 is modified to N6-acetyllysine. The HMG box 2 DNA-binding region spans 95–163 (PKRPPSAFFL…KYEKDIAAYR (69 aa)). Ser100 is subject to Phosphoserine. Cysteine sulfonic acid (-SO3H) is present on Cys106. An N6-acetyllysine mark is found at Lys127, Lys128, Lys141, Lys172, Lys173, Lys177, and Lys180. The interval 150–183 (KLKEKYEKDIAAYRAKGKPDAAKKGVVKAEKSKK) is binding to AGER/RAGE. The segment covering 161 to 179 (AYRAKGKPDAAKKGVVKAE) has biased composition (basic and acidic residues). The interval 161-215 (AYRAKGKPDAAKKGVVKAEKSKKKKEEEEDEEDEEDEEEEEDEEDEDEEEDDDDE) is disordered. Residues 178–184 (AEKSKKK) form an NLS 2 region. Residues 178–184 (AEKSKKK) carry the Nuclear localization signal (NLS) 2 motif. Residue Lys180 forms an Isoglutamyl lysine isopeptide (Lys-Gln) (interchain with Q-?) linkage. Ser181 bears the ADP-ribosylserine mark. Lys182, Lys183, Lys184, and Lys185 each carry N6-acetyllysine. Isoglutamyl lysine isopeptide (Lys-Gln) (interchain with Q-?) cross-links involve residues Lys182, Lys183, and Lys184. Acidic residues predominate over residues 187-215 (EEEDEEDEEDEEEEEDEEDEDEEEDDDDE).

Belongs to the HMGB family. Interacts (fully reduced HMGB1) with CXCL12; probably in a 1:2 ratio involving two molecules of CXCL12, each interacting with one HMG box of HMGB1; inhibited by glycyrrhizin. Associates with the TLR4:LY96 receptor complex. Component of the RAG complex composed of core components RAG1 and RAG2, and associated component HMGB1 or HMGB2. Interacts (in cytoplasm upon starvation) with BECN1; inhibits the interaction of BECN1 and BCL2 leading to promotion of autophagy. Interacts with KPNA1; involved in nuclear import. Interacts with SREBF1, TLR2, TLR4, TLR9, PTPRZ1, APEX1, FEN1, POLB, TERT. Interacts with IL1B, AGER, MSH2, XPA, XPC, HNF1A, TP53. Interacts with CD24; the probable CD24:SIGLEC10 complex is proposed to inhibit HGMB1-mediated tissue damage immune response. Interacts with THBD; prevents HGMB1 interaction with ACER/RAGE and inhibits HGMB1 pro-inflammatory activity. Interacts with HAVCR2; impairs HMGB1 binding to B-DNA and likely HMGB1-mediated innate immune response. Interacts with XPO1; mediating nuclear export. Interacts with receptor RAGE/AGER. In terms of processing, phosphorylated at serine residues. Phosphorylation in both NLS regions is required for cytoplasmic translocation followed by secretion. Acetylated on multiple sites upon stimulation with LPS. Acetylation on lysine residues in the nuclear localization signals (NLS 1 and NLS 2) leads to cytoplasmic localization and subsequent secretion. Acetylation on Lys-3 results in preferential binding to DNA ends and impairs DNA bending activity. Post-translationally, reduction/oxidation of cysteine residues Cys-23, Cys-45 and Cys-106 and a possible intramolecular disulfide bond involving Cys-23 and Cys-45 give rise to different redox forms with specific functional activities in various cellular compartments: 1- fully reduced HMGB1 (HMGB1C23hC45hC106h), 2- disulfide HMGB1 (HMGB1C23-C45C106h) and 3- sulfonyl HMGB1 (HMGB1C23soC45soC106so). In terms of processing, poly-ADP-ribosylated by PARP1 when secreted following stimulation with LPS. In vitro cleavage by CASP1 is liberating a HMG box 1-containing peptide which may mediate immunogenic activity; the peptide antagonizes apoptosis-induced immune tolerance. Can be proteolytically cleaved by a thrombin:thrombomodulin complex; reduces binding to heparin and pro-inflammatory activities. Post-translationally, forms covalent cross-links mediated by transglutaminase TGM2, between a glutamine and the epsilon-amino group of a lysine residue, forming homopolymers and heteropolymers.

Its subcellular location is the nucleus. It localises to the chromosome. The protein resides in the cytoplasm. The protein localises to the secreted. It is found in the cell membrane. Its subcellular location is the endosome. It localises to the endoplasmic reticulum-Golgi intermediate compartment. In terms of biological role, multifunctional redox sensitive protein with various roles in different cellular compartments. In the nucleus is one of the major chromatin-associated non-histone proteins and acts as a DNA chaperone involved in replication, transcription, chromatin remodeling, V(D)J recombination, DNA repair and genome stability. Proposed to be an universal biosensor for nucleic acids. Promotes host inflammatory response to sterile and infectious signals and is involved in the coordination and integration of innate and adaptive immune responses. In the cytoplasm functions as a sensor and/or chaperone for immunogenic nucleic acids implicating the activation of TLR9-mediated immune responses, and mediates autophagy. Acts as a danger-associated molecular pattern (DAMP) molecule that amplifies immune responses during tissue injury. Released to the extracellular environment can bind DNA, nucleosomes, IL-1 beta, CXCL12, AGER isoform 2/sRAGE, lipopolysaccharide (LPS) and lipoteichoic acid (LTA), and activates cells through engagement of multiple surface receptors. In the extracellular compartment fully reduced HMGB1 (released by necrosis) acts as a chemokine, disulfide HMGB1 (actively secreted) as a cytokine, and sulfonyl HMGB1 (released from apoptotic cells) promotes immunological tolerance. Has proangiogenic activity. May be involved in platelet activation. Binds to phosphatidylserine and phosphatidylethanolamide. Bound to RAGE mediates signaling for neuronal outgrowth. May play a role in accumulation of expanded polyglutamine (polyQ) proteins. Its function is as follows. Nuclear functions are attributed to fully reduced HGMB1. Associates with chromatin and binds DNA with a preference to non-canonical DNA structures such as single-stranded DNA, DNA-containing cruciforms or bent structures, supercoiled DNA and ZDNA. Can bent DNA and enhance DNA flexibility by looping thus providing a mechanism to promote activities on various gene promoters by enhancing transcription factor binding and/or bringing distant regulatory sequences into close proximity. May be involved in nucleotide excision repair (NER), mismatch repair (MMR) and base excision repair (BER) pathways, and double strand break repair such as non-homologous end joining (NHEJ). Involved in V(D)J recombination by acting as a cofactor of the RAG complex: acts by stimulating cleavage and RAG protein binding at the 23 bp spacer of conserved recombination signal sequences (RSS). In vitro can displace histone H1 from highly bent DNA. Can restructure the canonical nucleosome leading to relaxation of structural constraints for transcription factor-binding. Enhances binding of sterol regulatory element-binding proteins (SREBPs) such as SREBF1 to their cognate DNA sequences and increases their transcriptional activities. Facilitates binding of TP53 to DNA. May be involved in mitochondrial quality control and autophagy in a transcription-dependent fashion implicating HSPB1. Can modulate the activity of the telomerase complex and may be involved in telomere maintenance. Functionally, in the cytoplasm proposed to dissociate the BECN1:BCL2 complex via competitive interaction with BECN1 leading to autophagy activation. Can protect BECN1 and ATG5 from calpain-mediated cleavage and thus proposed to control their proautophagic and proapoptotic functions and to regulate the extent and severity of inflammation-associated cellular injury. In myeloid cells has a protective role against endotoxemia and bacterial infection by promoting autophagy. Involved in endosomal translocation and activation of TLR9 in response to CpG-DNA in macrophages. In the extracellular compartment (following either active secretion or passive release) involved in regulation of the inflammatory response. Fully reduced HGMB1 (which subsequently gets oxidized after release) in association with CXCL12 mediates the recruitment of inflammatory cells during the initial phase of tissue injury; the CXCL12:HMGB1 complex triggers CXCR4 homodimerization. Induces the migration of monocyte-derived immature dendritic cells and seems to regulate adhesive and migratory functions of neutrophils implicating AGER/RAGE and ITGAM. Can bind to various types of DNA and RNA including microbial unmethylated CpG-DNA to enhance the innate immune response to nucleic acids. Proposed to act in promiscuous DNA/RNA sensing which cooperates with subsequent discriminative sensing by specific pattern recognition receptors. Promotes extracellular DNA-induced AIM2 inflammasome activation implicating AGER/RAGE. Disulfide HMGB1 binds to transmembrane receptors, such as AGER/RAGE, TLR2, TLR4 and probably TREM1, thus activating their signal transduction pathways. Mediates the release of cytokines/chemokines such as TNF, IL-1, IL-6, IL-8, CCL2, CCL3, CCL4 and CXCL10. Promotes secretion of interferon-gamma by macrophage-stimulated natural killer (NK) cells in concert with other cytokines like IL-2 or IL-12. TLR4 is proposed to be the primary receptor promoting macrophage activation and signaling through TLR4 seems to implicate LY96/MD-2. In bacterial LPS- or LTA-mediated inflammatory responses binds to the endotoxins and transfers them to CD14 for signaling to the respective TLR4:LY96 and TLR2 complexes. Contributes to tumor proliferation by association with ACER/RAGE. Can bind to IL1-beta and signals through the IL1R1:IL1RAP receptor complex. Binding to class A CpG activates cytokine production in plasmacytoid dendritic cells implicating TLR9, MYD88 and AGER/RAGE and can activate autoreactive B cells. Via HMGB1-containing chromatin immune complexes may also promote B cell responses to endogenous TLR9 ligands through a B-cell receptor (BCR)-dependent and ACER/RAGE-independent mechanism. Inhibits phagocytosis of apoptotic cells by macrophages; the function is dependent on poly-ADP-ribosylation and involves binding to phosphatidylserine on the cell surface of apoptotic cells. In adaptive immunity may be involved in enhancing immunity through activation of effector T-cells and suppression of regulatory T (TReg) cells. In contrast, without implicating effector or regulatory T-cells, required for tumor infiltration and activation of T-cells expressing the lymphotoxin LTA:LTB heterotrimer thus promoting tumor malignant progression. Also reported to limit proliferation of T-cells. Released HMGB1:nucleosome complexes formed during apoptosis can signal through TLR2 to induce cytokine production. Involved in induction of immunological tolerance by apoptotic cells; its pro-inflammatory activities when released by apoptotic cells are neutralized by reactive oxygen species (ROS)-dependent oxidation specifically on Cys-106. During macrophage activation by activated lymphocyte-derived self apoptotic DNA (ALD-DNA) promotes recruitment of ALD-DNA to endosomes. This chain is High mobility group protein B1 (HMGB1), found in Canis lupus familiaris (Dog).